The following is a 366-amino-acid chain: Lysophosphatidic acid receptor 1-A (366 aa).

Over 1–52 the chain is Extracellular; it reads MASLSEFVSEPISMMSQTSAASESQCYYNETIAFFYNRSGKYLATEWNAVSK. Intrachain disulfides connect Cys26–Cys192 and Cys190–Cys197. 2 N-linked (GlcNAc...) asparagine glycosylation sites follow: Asn29 and Asn37. Lys41 serves as a coordination point for a 1-acyl-sn-glycero-3-phosphate. A helical transmembrane segment spans residues 53-77; the sequence is LVMGLGITVCIFIMLANLLVMVAIY. Over 78–85 the chain is Cytoplasmic; that stretch reads VNRRFHFP. A helical transmembrane segment spans residues 86–109; sequence IYYLMANLAAADFFAGLAYFYLMF. The Extracellular segment spans residues 110–123; that stretch reads NTGPNTRRLTVSTW. A helical transmembrane segment spans residues 124 to 146; it reads LLRQGLIDTSLTASVANLLAIAI. Residue 126–131 participates in a 1-acyl-sn-glycero-3-phosphate binding; sequence RQGLID. At 147–165 the chain is on the cytoplasmic side; it reads ERHITVFRMQLHTRMSNRR. The chain crosses the membrane as a helical span at residues 166–186; sequence VVVVIVVIWTVAIVMGAIPSV. Over 187–206 the chain is Extracellular; it reads GWNCICDLEQCSNMAPLYSD. Residues 207-227 traverse the membrane as a helical segment; that stretch reads SYLIFWTIFNLVTFVVMVVLY. Trp212 serves as a coordination point for a 1-acyl-sn-glycero-3-phosphate. Topologically, residues 228-257 are cytoplasmic; the sequence is AHIFVYVRQKTMRMSRHSSGPRRNRDTMMS. Residues 258–282 form a helical membrane-spanning segment; it reads LLKTVVIVLGAFIVCWTPGLVLLLL. Topologically, residues 283–296 are extracellular; that stretch reads DICCPQCNILAYEK. The cysteines at positions 286 and 289 are disulfide-linked. Residues 297-317 form a helical membrane-spanning segment; that stretch reads FFLLLAEFNSAMNPIIYSYRD. Residues 318-366 lie on the Cytoplasmic side of the membrane; it reads KEMSATFKQILCCQRTENVNGPTEGSDRSASSLNHTILAGVHSNDHSVV.

Belongs to the G-protein coupled receptor 1 family. As to expression, expressed at high levels in oocytes and at lower levels in brain and spinal cord. Below detection level in lung, heart, kidney, liver, muscle, stomach, and intestine.

It is found in the cell surface. The protein localises to the cell membrane. Its subcellular location is the endosome. In terms of biological role, receptor for lysophosphatidic acid (LPA). Plays a role in the reorganization of the actin cytoskeleton, cell migration, differentiation and proliferation, and thereby contributes to the responses to tissue damage and infectious agents. Activates downstream signaling cascades via the G(i)/G(o), G(12)/G(13), and G(q) families of heteromeric G proteins. Signaling inhibits adenylyl cyclase activity and decreases cellular cAMP levels. Signaling triggers an increase of cytoplasmic Ca(2+) levels. Signaling leads to the activation of phospholipase C (PLC) and the formation of inositol 1,4,5-trisphosphate. Signaling mediates activation of down-stream MAP kinases. Contributes to the regulation of cell shape. Promotes Rho-dependent reorganization of the actin cytoskeleton in neuronal cells and neurite retraction. Promotes the activation of Rho and the formation of actin stress fibers. Promotes formation of lamellipodia at the leading edge of migrating cells via activation of Rac. Through its function as lysophosphatidic acid receptor, plays a role in chemotaxis and cell migration, including responses to injury and wounding. Promotes cell proliferation in response to lysophosphatidic acid. The protein is Lysophosphatidic acid receptor 1-A (lpar1-a) of Xenopus laevis (African clawed frog).